We begin with the raw amino-acid sequence, 298 residues long: Proline-rich protein 32 (298 aa).

Residues 36–56 (CLSSKPEDDAEPWGQPQVPLR) are disordered.

The sequence is that of Proline-rich protein 32 (PRR32) from Homo sapiens (Human).